Reading from the N-terminus, the 230-residue chain is uncharacterized protein (230 aa).

Disordered regions lie at residues 63–90 and 194–230; these read TDCQTLKEEPKEQKKENNKNDENSKKTI and KKLEEREQMDKHPQDRDNKDKEVNEQPDNEEQDYKEH. Basic and acidic residues predominate over residues 194-217; that stretch reads KKLEEREQMDKHPQDRDNKDKEVN.

This is an uncharacterized protein from Caenorhabditis elegans.